A 363-amino-acid chain; its full sequence is DNA replication and repair protein RecF (363 aa).

33 to 40 (GDNGQGKT) contributes to the ATP binding site.

The protein belongs to the RecF family.

Its subcellular location is the cytoplasm. The RecF protein is involved in DNA metabolism; it is required for DNA replication and normal SOS inducibility. RecF binds preferentially to single-stranded, linear DNA. It also seems to bind ATP. The chain is DNA replication and repair protein RecF from Tropheryma whipplei (strain TW08/27) (Whipple's bacillus).